A 126-amino-acid chain; its full sequence is Muscarinic acetylcholine receptor M4 (126 aa).

The disordered stretch occupies residues 1 to 90 (MKQSVKKPPP…LQPRTLNPAS (90 aa)). Residues 1-126 (MKQSVKKPPP…PAGMRPAANV (126 aa)) lie on the Cytoplasmic side of the membrane. Positions 28–39 (APPPVLPPPPRP) are enriched in pro residues. Residues 47–57 (NESSSGSATQN) are compositionally biased toward polar residues. Low complexity predominate over residues 64 to 75 (TELSTTEATTPA).

Belongs to the G-protein coupled receptor 1 family. Muscarinic acetylcholine receptor subfamily. CHRM4 sub-subfamily.

The protein localises to the cell membrane. Its subcellular location is the postsynaptic cell membrane. In terms of biological role, the muscarinic acetylcholine receptor mediates various cellular responses, including inhibition of adenylate cyclase, breakdown of phosphoinositides and modulation of potassium channels through the action of G proteins. Primary transducing effect is inhibition of adenylate cyclase. May couple to multiple functional responses in cell lines. The chain is Muscarinic acetylcholine receptor M4 (CHRM4) from Bos taurus (Bovine).